Consider the following 255-residue polypeptide: Ribonuclease HII (255 aa).

In terms of domain architecture, RNase H type-2 spans 70–255 (EYIAGVDEVG…FEPVKKILLK (186 aa)). A divalent metal cation-binding residues include D76, E77, and D168.

This sequence belongs to the RNase HII family. Mn(2+) is required as a cofactor. It depends on Mg(2+) as a cofactor.

It is found in the cytoplasm. It carries out the reaction Endonucleolytic cleavage to 5'-phosphomonoester.. Functionally, endonuclease that specifically degrades the RNA of RNA-DNA hybrids. This Ligilactobacillus salivarius (strain UCC118) (Lactobacillus salivarius) protein is Ribonuclease HII.